We begin with the raw amino-acid sequence, 190 residues long: Large ribosomal subunit protein bL25 (190 aa).

Belongs to the bacterial ribosomal protein bL25 family. CTC subfamily. Part of the 50S ribosomal subunit; part of the 5S rRNA/L5/L18/L25 subcomplex. Contacts the 5S rRNA. Binds to the 5S rRNA independently of L5 and L18.

Functionally, this is one of the proteins that binds to the 5S RNA in the ribosome where it forms part of the central protuberance. In Neisseria meningitidis serogroup C / serotype 2a (strain ATCC 700532 / DSM 15464 / FAM18), this protein is Large ribosomal subunit protein bL25.